We begin with the raw amino-acid sequence, 273 residues long: NH(3)-dependent NAD(+) synthetase (273 aa).

An ATP-binding site is contributed by 46-53 (GISGGQDS). Aspartate 52 lines the Mg(2+) pocket. Residue arginine 139 coordinates deamido-NAD(+). Threonine 159 contributes to the ATP binding site. A Mg(2+)-binding site is contributed by glutamate 164. Lysine 172 and aspartate 179 together coordinate deamido-NAD(+). ATP-binding residues include lysine 188 and threonine 210. 259–260 (HK) contacts deamido-NAD(+).

The protein belongs to the NAD synthetase family. Homodimer.

It carries out the reaction deamido-NAD(+) + NH4(+) + ATP = AMP + diphosphate + NAD(+) + H(+). It functions in the pathway cofactor biosynthesis; NAD(+) biosynthesis; NAD(+) from deamido-NAD(+) (ammonia route): step 1/1. Its function is as follows. Catalyzes the ATP-dependent amidation of deamido-NAD to form NAD. Uses ammonia as a nitrogen source. The chain is NH(3)-dependent NAD(+) synthetase from Mycobacteroides abscessus (strain ATCC 19977 / DSM 44196 / CCUG 20993 / CIP 104536 / JCM 13569 / NCTC 13031 / TMC 1543 / L948) (Mycobacterium abscessus).